The following is a 431-amino-acid chain: Shaggy-related protein kinase beta (431 aa).

Over residues 12–24 the composition is skewed to polar residues; sequence SGRNFVSSDNVGE. Residues 12–65 are disordered; the sequence is SGRNFVSSDNVGETETPRSKPNQNREETESTETTSYEKDSVSSSENSDHLPKEI. 2 stretches are compositionally biased toward basic and acidic residues: residues 26–39 and 46–65; these read ETPR…REET and SYEK…PKEI. In terms of domain architecture, Protein kinase spans 102-386; the sequence is YRAEHVIGTG…ALEACAHPFF (285 aa). ATP contacts are provided by residues 108–116 and lysine 131; that span reads IGTGSFGVV. Aspartate 227 functions as the Proton acceptor in the catalytic mechanism. Tyrosine 262 is modified (phosphotyrosine).

This sequence belongs to the protein kinase superfamily. CMGC Ser/Thr protein kinase family. GSK-3 subfamily. Post-translationally, autophosphorylated mainly on threonine and serine residues.

It carries out the reaction L-seryl-[protein] + ATP = O-phospho-L-seryl-[protein] + ADP + H(+). It catalyses the reaction L-threonyl-[protein] + ATP = O-phospho-L-threonyl-[protein] + ADP + H(+). Its function is as follows. May mediate extracellular signals to regulate transcription in differentiating cells. The protein is Shaggy-related protein kinase beta of Arabidopsis thaliana (Mouse-ear cress).